A 240-amino-acid polypeptide reads, in one-letter code: Ribonuclease PH (240 aa).

Phosphate contacts are provided by residues R87 and 125 to 127 (GTR).

It belongs to the RNase PH family. Homohexameric ring arranged as a trimer of dimers.

The catalysed reaction is tRNA(n+1) + phosphate = tRNA(n) + a ribonucleoside 5'-diphosphate. Functionally, phosphorolytic 3'-5' exoribonuclease that plays an important role in tRNA 3'-end maturation. Removes nucleotide residues following the 3'-CCA terminus of tRNAs; can also add nucleotides to the ends of RNA molecules by using nucleoside diphosphates as substrates, but this may not be physiologically important. Probably plays a role in initiation of 16S rRNA degradation (leading to ribosome degradation) during starvation. In Pseudomonas fluorescens (strain ATCC BAA-477 / NRRL B-23932 / Pf-5), this protein is Ribonuclease PH.